We begin with the raw amino-acid sequence, 482 residues long: Alanine aminotransferase 2 (482 aa).

Lys299 carries the N6-(pyridoxal phosphate)lysine modification.

Belongs to the class-I pyridoxal-phosphate-dependent aminotransferase family. Alanine aminotransferase subfamily. As to quaternary structure, homodimer. The cofactor is pyridoxal 5'-phosphate. Post-translationally, the N-terminus is blocked. In terms of tissue distribution, mesophyll and bundle sheath cells.

The enzyme catalyses L-alanine + 2-oxoglutarate = pyruvate + L-glutamate. It functions in the pathway photosynthesis; C4 acid pathway. The protein operates within amino-acid degradation; L-alanine degradation via transaminase pathway; pyruvate from L-alanine: step 1/1. Its function is as follows. Transfer of C3 units between the cytosol of mesophyll and bundle sheath cells to maintain a nitrogen-carbon balance in the C4-dicarboxylic pathway. The sequence is that of Alanine aminotransferase 2 from Panicum miliaceum (Proso millet).